A 336-amino-acid polypeptide reads, in one-letter code: Plant-specific TFIIB-related protein 2 (336 aa).

Residues 2-34 form a TFIIB-type zinc finger; the sequence is EEETCLDCKRPTIMVVDHSSGDTICSECGLVLE. Positions 6, 9, 26, and 29 each coordinate Zn(2+).

In terms of tissue distribution, specifically expressed in reproductive organs and seeds.

Its subcellular location is the nucleus. Plant-specific TFIIB-related protein involved in the regulation of endosperm proliferation during the syncytial phase of endosperm development. Does not contribute to RNA polymerase IV or V activities in reproductive tissues. The protein is Plant-specific TFIIB-related protein 2 of Arabidopsis thaliana (Mouse-ear cress).